A 216-amino-acid polypeptide reads, in one-letter code: uncharacterized protein (216 aa).

This is an uncharacterized protein from Methylophilus leisingeri (strain DSM 6813 / VKM B-2013 / DM11).